We begin with the raw amino-acid sequence, 115 residues long: U3-lycotoxin-Ls1a (115 aa).

Residues 1–20 (MKFVLLFGVFLVTLFSYSSA) form the signal peptide. The propeptide occupies 21–44 (EMLDDFGQADEDELLSLIEKEEAR). Disulfide bonds link Cys48-Cys63, Cys55-Cys72, Cys62-Cys87, and Cys74-Cys85.

This sequence belongs to the neurotoxin 19 (CSTX) family. 01 subfamily. As to expression, expressed by the venom gland.

It is found in the secreted. This Lycosa singoriensis (Wolf spider) protein is U3-lycotoxin-Ls1a.